Consider the following 425-residue polypeptide: Metacaspase-1 (425 aa).

A disordered region spans residues 1–110 (MSYNSNPYNG…PQLPNTQTQS (110 aa)). Low complexity predominate over residues 13–28 (YPPYNTYTRPNYSPNN). 2 stretches are compositionally biased toward polar residues: residues 29–38 (GSQSNNTVHQ) and 88–110 (TGAN…QTQS). Active-site residues include H214 and C270.

Belongs to the peptidase C14B family.

The protein resides in the cytoplasm. The protein localises to the nucleus. Functionally, involved in cell death (apoptosis). The chain is Metacaspase-1 (pca1) from Schizosaccharomyces pombe (strain 972 / ATCC 24843) (Fission yeast).